Consider the following 419-residue polypeptide: Transcription termination factor Rho (419 aa).

The Rho RNA-BD domain maps to 48–123; it reads EISGDGVLEI…LKVDSINFDR (76 aa). 3 RNA-binding regions span residues 61-66, 78-80, and 108-110; these read GFGFLR, DIY, and ERY. ATP contacts are provided by residues 169 to 174, 181 to 186, and Arg-212; these read GKGQRG and KAGKTI. An RNA-binding 2 region spans residues 284 to 288; the sequence is VLTGG.

The protein belongs to the Rho family. In terms of assembly, homohexamer. The homohexamer assembles into an open ring structure.

Functionally, facilitates transcription termination by a mechanism that involves Rho binding to the nascent RNA, activation of Rho's RNA-dependent ATPase activity, and release of the mRNA from the DNA template. The protein is Transcription termination factor Rho of Pseudomonas aeruginosa (strain ATCC 15692 / DSM 22644 / CIP 104116 / JCM 14847 / LMG 12228 / 1C / PRS 101 / PAO1).